Consider the following 503-residue polypeptide: Probable cytosol aminopeptidase (503 aa).

Mn(2+) is bound by residues lysine 268 and aspartate 273. Lysine 280 is a catalytic residue. Mn(2+) is bound by residues aspartate 291, aspartate 350, and glutamate 352. Arginine 354 is a catalytic residue.

It belongs to the peptidase M17 family. Requires Mn(2+) as cofactor.

The protein localises to the cytoplasm. The enzyme catalyses Release of an N-terminal amino acid, Xaa-|-Yaa-, in which Xaa is preferably Leu, but may be other amino acids including Pro although not Arg or Lys, and Yaa may be Pro. Amino acid amides and methyl esters are also readily hydrolyzed, but rates on arylamides are exceedingly low.. It carries out the reaction Release of an N-terminal amino acid, preferentially leucine, but not glutamic or aspartic acids.. In terms of biological role, presumably involved in the processing and regular turnover of intracellular proteins. Catalyzes the removal of unsubstituted N-terminal amino acids from various peptides. In Methylobacterium radiotolerans (strain ATCC 27329 / DSM 1819 / JCM 2831 / NBRC 15690 / NCIMB 10815 / 0-1), this protein is Probable cytosol aminopeptidase.